The following is a 345-amino-acid chain: UDP-N-acetylenolpyruvoylglucosamine reductase (345 aa).

The FAD-binding PCMH-type domain occupies Val15–Lys218. Arg161 is an active-site residue. The active-site Proton donor is Ser230. Glu327 is a catalytic residue.

This sequence belongs to the MurB family. Requires FAD as cofactor.

The protein resides in the cytoplasm. It carries out the reaction UDP-N-acetyl-alpha-D-muramate + NADP(+) = UDP-N-acetyl-3-O-(1-carboxyvinyl)-alpha-D-glucosamine + NADPH + H(+). It functions in the pathway cell wall biogenesis; peptidoglycan biosynthesis. In terms of biological role, cell wall formation. The chain is UDP-N-acetylenolpyruvoylglucosamine reductase from Blochmanniella floridana.